The following is a 255-amino-acid chain: Trypsin alpha-4 (255 aa).

Positions 1-16 (MLKFVVLLCAISCALG) are cleaved as a signal peptide. Residues 17–30 (AAVPEGMVPQLDGR) constitute a propeptide, activation peptide. Residues 31–253 (IVGGVATTIS…LRTWVVSAAS (223 aa)) enclose the Peptidase S1 domain. The cysteines at positions 56 and 72 are disulfide-linked. Residues histidine 71 and aspartate 116 each act as charge relay system in the active site. Intrachain disulfides connect cysteine 179/cysteine 196 and cysteine 205/cysteine 229. The Charge relay system role is filled by serine 209.

The protein belongs to the peptidase S1 family.

The protein localises to the secreted. It is found in the extracellular space. It catalyses the reaction Preferential cleavage: Arg-|-Xaa, Lys-|-Xaa.. The polypeptide is Trypsin alpha-4 (Lucilia cuprina (Green bottle fly)).